Consider the following 303-residue polypeptide: Bifunctional protein FolD 2 (303 aa).

Residues 169 to 171, Ser194, and Ile235 each bind NADP(+); that span reads GRS.

The protein belongs to the tetrahydrofolate dehydrogenase/cyclohydrolase family. In terms of assembly, homodimer.

The enzyme catalyses (6R)-5,10-methylene-5,6,7,8-tetrahydrofolate + NADP(+) = (6R)-5,10-methenyltetrahydrofolate + NADPH. It catalyses the reaction (6R)-5,10-methenyltetrahydrofolate + H2O = (6R)-10-formyltetrahydrofolate + H(+). Its pathway is one-carbon metabolism; tetrahydrofolate interconversion. In terms of biological role, catalyzes the oxidation of 5,10-methylenetetrahydrofolate to 5,10-methenyltetrahydrofolate and then the hydrolysis of 5,10-methenyltetrahydrofolate to 10-formyltetrahydrofolate. This Ectopseudomonas mendocina (strain ymp) (Pseudomonas mendocina) protein is Bifunctional protein FolD 2.